We begin with the raw amino-acid sequence, 664 residues long: PAN2-PAN3 deadenylation complex subunit PAN3 (664 aa).

Disordered regions lie at residues 1–27 (MATTGKSATLEDARHGTGSPKMKGREN) and 54–134 (DPHK…PGTM). Residues 27-56 (NAKDTLCRNVTIYGRCRYEDKGCAFNHDPH) form a C3H1-type zinc finger. Residues 74 to 96 (DSPSFTPSILSSNGSSPTSQSAT) show a composition bias toward polar residues. Residues 115–131 (PRSISSRSNSSTPTTRP) are compositionally biased toward low complexity. The segment at 265-525 (QTLPNTQLPA…NIDIFITGIS (261 aa)) is pseudokinase domain. Residues R317, 366–373 (DYHPLSKT), and 425–426 (SK) contribute to the ATP site. Positions 526-564 (STLMSTFDSALHLDDQLTSDLSRELENGRLVRLMTKLNF) form a coiled coil. Residues 565-664 (VNERPEYEHD…LKPSASRRLH (100 aa)) are knob domain.

Belongs to the protein kinase superfamily. PAN3 family. As to quaternary structure, homodimer. Forms a heterotrimer with a catalytic subunit pan2 to form the poly(A)-nuclease (PAN) deadenylation complex. Interacts (via PAM-2 motif) with poly(A)-binding protein pab1 (via PABC domain), conferring substrate specificity of the enzyme complex.

It is found in the cytoplasm. Regulatory subunit of the poly(A)-nuclease (PAN) deadenylation complex, one of two cytoplasmic mRNA deadenylases involved in mRNA turnover. PAN specifically shortens poly(A) tails of RNA and the activity is stimulated by poly(A)-binding protein pab1. PAN deadenylation is followed by rapid degradation of the shortened mRNA tails by the CCR4-NOT complex. Deadenylated mRNAs are then degraded by two alternative mechanisms, namely exosome-mediated 3'-5' exonucleolytic degradation, or deadenylation-dependent mRNA decaping and subsequent 5'-3' exonucleolytic degradation by xrn1. May also be involved in post-transcriptional maturation of mRNA poly(A) tails. pan3 acts as a positive regulator for PAN activity, recruiting the catalytic subunit pan2 to mRNA via its interaction with RNA and with pab1. This is PAN2-PAN3 deadenylation complex subunit PAN3 from Aspergillus niger (strain ATCC MYA-4892 / CBS 513.88 / FGSC A1513).